Reading from the N-terminus, the 295-residue chain is NAD kinase (295 aa).

The Proton acceptor role is filled by aspartate 72. NAD(+)-binding positions include 72 to 73, 146 to 147, arginine 157, lysine 174, aspartate 176, 187 to 192, and glutamine 247; these read DG, ND, and TAYALS.

The protein belongs to the NAD kinase family. Requires a divalent metal cation as cofactor.

It localises to the cytoplasm. It catalyses the reaction NAD(+) + ATP = ADP + NADP(+) + H(+). Functionally, involved in the regulation of the intracellular balance of NAD and NADP, and is a key enzyme in the biosynthesis of NADP. Catalyzes specifically the phosphorylation on 2'-hydroxyl of the adenosine moiety of NAD to yield NADP. In Ectopseudomonas mendocina (strain ymp) (Pseudomonas mendocina), this protein is NAD kinase.